The sequence spans 611 residues: DNA mismatch repair protein MutL (611 aa).

Residues 364–384 (NVNSKPSKYRPATSPTVPKYT) are disordered.

It belongs to the DNA mismatch repair MutL/HexB family.

Its function is as follows. This protein is involved in the repair of mismatches in DNA. It is required for dam-dependent methyl-directed DNA mismatch repair. May act as a 'molecular matchmaker', a protein that promotes the formation of a stable complex between two or more DNA-binding proteins in an ATP-dependent manner without itself being part of a final effector complex. The polypeptide is DNA mismatch repair protein MutL (Rickettsia bellii (strain OSU 85-389)).